A 122-amino-acid polypeptide reads, in one-letter code: Large ribosomal subunit protein uL14 (122 aa).

This sequence belongs to the universal ribosomal protein uL14 family. As to quaternary structure, part of the 50S ribosomal subunit. Forms a cluster with proteins L3 and L19. In the 70S ribosome, L14 and L19 interact and together make contacts with the 16S rRNA in bridges B5 and B8.

Binds to 23S rRNA. Forms part of two intersubunit bridges in the 70S ribosome. This chain is Large ribosomal subunit protein uL14, found in Solibacter usitatus (strain Ellin6076).